The sequence spans 56 residues: Conotoxin Cal6.41b (56 aa).

Residues M1–T23 form the signal peptide. 3 disulfide bridges follow: C27–C41, C33–C50, and C40–C54.

In terms of tissue distribution, expressed by the venom duct.

It is found in the secreted. Functionally, probable neurotoxin. The polypeptide is Conotoxin Cal6.41b (Californiconus californicus (California cone)).